Consider the following 367-residue polypeptide: Glutamate 5-kinase (367 aa).

Lys10 is an ATP binding site. Substrate is bound by residues Ser50, Asp137, and Asn149. Residues 169–170 (TD) and 211–217 (TGGMGTK) each bind ATP. A PUA domain is found at 275–353 (AGELTVDAGA…QQIDAILGYE (79 aa)).

This sequence belongs to the glutamate 5-kinase family.

The protein localises to the cytoplasm. It carries out the reaction L-glutamate + ATP = L-glutamyl 5-phosphate + ADP. It functions in the pathway amino-acid biosynthesis; L-proline biosynthesis; L-glutamate 5-semialdehyde from L-glutamate: step 1/2. Catalyzes the transfer of a phosphate group to glutamate to form L-glutamate 5-phosphate. This chain is Glutamate 5-kinase, found in Klebsiella pneumoniae (strain 342).